We begin with the raw amino-acid sequence, 468 residues long: Probable Xaa-Pro aminopeptidase PEPP (468 aa).

The Mn(2+) site is built by D264, D275, E398, and E438.

The protein belongs to the peptidase M24B family. Mn(2+) is required as a cofactor.

It catalyses the reaction Release of any N-terminal amino acid, including proline, that is linked to proline, even from a dipeptide or tripeptide.. Its function is as follows. Catalyzes the removal of a penultimate prolyl residue from the N-termini of peptides. In Ajellomyces dermatitidis (strain ER-3 / ATCC MYA-2586) (Blastomyces dermatitidis), this protein is Probable Xaa-Pro aminopeptidase PEPP (PEPP).